The following is an 88-amino-acid chain: MIASSVKAEVVKANARSANDTGSPEVQVALLTARINELTPHFKQHAKDHHGRRGLLRMVSRRRKLLDYLKAKDADRYTALIAKLGLRK.

Belongs to the universal ribosomal protein uS15 family. Part of the 30S ribosomal subunit. Forms a bridge to the 50S subunit in the 70S ribosome, contacting the 23S rRNA.

One of the primary rRNA binding proteins, it binds directly to 16S rRNA where it helps nucleate assembly of the platform of the 30S subunit by binding and bridging several RNA helices of the 16S rRNA. Functionally, forms an intersubunit bridge (bridge B4) with the 23S rRNA of the 50S subunit in the ribosome. This chain is Small ribosomal subunit protein uS15, found in Acidovorax sp. (strain JS42).